Consider the following 107-residue polypeptide: Vasopressin-neurophysin 2 (107 aa).

Cysteines 1 and 6 form a disulfide. Position 9 is a glycine amide (Gly9). 7 disulfides stabilise this stretch: Cys22/Cys66, Cys25/Cys39, Cys33/Cys56, Cys40/Cys46, Cys73/Cys85, Cys79/Cys97, and Cys86/Cys91.

This sequence belongs to the vasopressin/oxytocin family. As to quaternary structure, interacts with vasopressin receptors V1bR/AVPR1B (Ki=85 pM), V1aR/AVPR1A (Ki=0.6 nM) and V2R/AVPR2 (Ki=4.9 nM). Interacts with oxytocin receptor (OXTR) (Ki=110 nM).

Its subcellular location is the secreted. Neurophysin 2 specifically binds vasopressin. In terms of biological role, vasopressin has a direct antidiuretic action on the kidney, it also causes vasoconstriction of the peripheral vessels. Acts by binding to vasopressin receptors (V1bR/AVPR1B, V1aR/AVPR1A, and V2R/AVPR2). The sequence is that of Vasopressin-neurophysin 2 (AVP) from Balaenoptera physalus (Fin whale).